The chain runs to 247 residues: 2,3-bisphosphoglycerate-dependent phosphoglycerate mutase (247 aa).

Substrate contacts are provided by residues 13-20 (RHGESDWN), 26-27 (TG), arginine 65, 92-95 (ERHY), lysine 103, 119-120 (RR), and 186-187 (GN). Histidine 14 functions as the Tele-phosphohistidine intermediate in the catalytic mechanism. Residue glutamate 92 is the Proton donor/acceptor of the active site.

This sequence belongs to the phosphoglycerate mutase family. BPG-dependent PGAM subfamily. Homotetramer, dimer of dimers.

The catalysed reaction is (2R)-2-phosphoglycerate = (2R)-3-phosphoglycerate. It functions in the pathway carbohydrate degradation; glycolysis; pyruvate from D-glyceraldehyde 3-phosphate: step 3/5. In terms of biological role, catalyzes the interconversion of 2-phosphoglycerate and 3-phosphoglycerate. This is 2,3-bisphosphoglycerate-dependent phosphoglycerate mutase from Mycobacterium leprae (strain Br4923).